Reading from the N-terminus, the 178-residue chain is Fatty-acid and retinol-binding protein 1 (178 aa).

Positions 1–16 (MYHQLILMALIGVIMA) are cleaved as a signal peptide. Asn-44 and Asn-75 each carry an N-linked (GlcNAc...) asparagine glycan. Coiled-coil stretches lie at residues 67 to 89 (DAALEALKNKSDKLYQKAVELRN) and 123 to 153 (KLDVEKLKQAARDIIAKYEALNEETKEELKA). N-linked (GlcNAc...) asparagine glycosylation occurs at Asn-157.

This sequence belongs to the fatty-acid and retinol-binding protein (FARBP) family. N-glycosylated.

Its subcellular location is the secreted. Binds retinol and different fatty acids. This is Fatty-acid and retinol-binding protein 1 from Acanthocheilonema viteae (Filarial nematode worm).